Here is a 429-residue protein sequence, read N- to C-terminus: Actin-like protein 6A (429 aa).

Serine 2 is subject to N-acetylserine. Lysine 62 participates in a covalent cross-link: Glycyl lysine isopeptide (Lys-Gly) (interchain with G-Cter in SUMO2). Residues serine 86 and serine 233 each carry the phosphoserine modification.

It belongs to the actin family. As to quaternary structure, component of numerous complexes with chromatin remodeling and histone acetyltransferase activity. Component of the NuA4 histone acetyltransferase complex which contains the catalytic subunit KAT5/TIP60 and the subunits EP400, TRRAP/PAF400, BRD8/SMAP, EPC1, DMAP1/DNMAP1, RUVBL1/TIP49, RUVBL2, ING3, actin, ACTL6A/BAF53A, MORF4L1/MRG15, MORF4L2/MRGX, MRGBP, YEATS4/GAS41, VPS72/YL1 and MEAF6. The NuA4 complex interacts with MYC and the adenovirus E1A protein. Component of a NuA4-related complex which contains EP400, TRRAP/PAF400, SRCAP, BRD8/SMAP, EPC1, DMAP1/DNMAP1, RUVBL1/TIP49, RUVBL2, actin, ACTL6A/BAF53A, VPS72 and YEATS4/GAS41. Component of the multiprotein chromatin-remodeling complexes SWI/SNF: SWI/SNF-A (BAF), SWI/SNF-B (PBAF) and related complexes. The canonical complex contains a catalytic subunit (either SMARCA4/BRG1/BAF190A or SMARCA2/BRM/BAF190B) and at least SMARCE1, ACTL6A/BAF53, SMARCC1/BAF155, SMARCC2/BAF170, and SMARCB1/SNF5/BAF47. Other subunits specific to each of the complexes may also be present permitting several possible combinations developmentally and tissue specific. Component of the BAF complex, which includes at least actin (ACTB), ARID1A/BAF250A, ARID1B/BAF250B, SMARCA2/BRM, SMARCA4/BRG1/BAF190A, ACTL6A/BAF53, ACTL6B/BAF53B, SMARCE1/BAF57, SMARCC1/BAF155, SMARCC2/BAF170, SMARCB1/SNF5/INI1, and one or more SMARCD1/BAF60A, SMARCD2/BAF60B, or SMARCD3/BAF60C. In muscle cells, the BAF complex also contains DPF3. Component of the BAF53 complex, at least composed of ACTL6A/BAF53A, RUVBL1/TIP49, SMARCA2/BRM/BAF190B and TRRAP/PAF400, and which may also include a HAT activity related to, but distinct from, that of KAT5. Component of neural progenitors-specific chromatin remodeling complex (npBAF complex) composed of at least, ARID1A/BAF250A or ARID1B/BAF250B, SMARCD1/BAF60A, SMARCD3/BAF60C, SMARCA2/BRM/BAF190B, SMARCA4/BRG1/BAF190A, SMARCB1/BAF47, SMARCC1/BAF155, SMARCE1/BAF57, SMARCC2/BAF170, PHF10/BAF45A, ACTL6A/BAF53A and actin. Component of SWI/SNF (GBAF) subcomplex, which includes at least BICRA or BICRAL (mutually exclusive), BRD9, SS18, SMARCA2/BRM, SMARCA4/BRG1/BAF190A, ACTL6A/BAF53, SMARCC1/BAF155, and SMARCD1/BAF60A. May be a component of the SWI/SNF-B (PBAF) chromatin remodeling complex, at least composed of SMARCA4/BRG1, SMARCB1/BAF47/SNF5, ACTL6A/BAF53A or ACTL6B/BAF53B, SMARCE1/BAF57, SMARCD1/BAF60A, SMARCD2/BAF60B, perhaps SMARCD3/BAF60C, SMARCC1/BAF155, SMARCC2/BAF170, PBRM1/BAF180, ARID2/BAF200 and actin. Interacts with SMARCA4/BRG1/BAF190A. Interacts with PHF10/BAF45A. Component of the chromatin remodeling INO80 complex; specifically part of a complex module associated with the DBINO domain of INO80. Interacts with DPF2. As to expression, widely expressed. Expressed selectively in neural stem and progenitor cells (at protein level).

The protein localises to the nucleus. Its function is as follows. Involved in transcriptional activation and repression of select genes by chromatin remodeling (alteration of DNA-nucleosome topology). Component of SWI/SNF chromatin remodeling complexes that carry out key enzymatic activities, changing chromatin structure by altering DNA-histone contacts within a nucleosome in an ATP-dependent manner. Required for maximal ATPase activity of SMARCA4/BRG1/BAF190A and for association of the SMARCA4/BRG1/BAF190A containing remodeling complex BAF with chromatin/nuclear matrix. Belongs to the neural progenitors-specific chromatin remodeling complex (npBAF complex) and is required for the proliferation of neural progenitors. During neural development a switch from a stem/progenitor to a postmitotic chromatin remodeling mechanism occurs as neurons exit the cell cycle and become committed to their adult state. The transition from proliferating neural stem/progenitor cells to postmitotic neurons requires a switch in subunit composition of the npBAF and nBAF complexes. As neural progenitors exit mitosis and differentiate into neurons, npBAF complexes which contain ACTL6A/BAF53A and PHF10/BAF45A, are exchanged for homologous alternative ACTL6B/BAF53B and DPF1/BAF45B or DPF3/BAF45C subunits in neuron-specific complexes (nBAF). The npBAF complex is essential for the self-renewal/proliferative capacity of the multipotent neural stem cells. The nBAF complex along with CREST plays a role regulating the activity of genes essential for dendrite growth. Component of the NuA4 histone acetyltransferase (HAT) complex which is involved in transcriptional activation of select genes principally by acetylation of nucleosomal histones H4 and H2A. This modification may both alter nucleosome - DNA interactions and promote interaction of the modified histones with other proteins which positively regulate transcription. This complex may be required for the activation of transcriptional programs associated with oncogene and proto-oncogene mediated growth induction, tumor suppressor mediated growth arrest and replicative senescence, apoptosis, and DNA repair. NuA4 may also play a direct role in DNA repair when recruited to sites of DNA damage. Putative core component of the chromatin remodeling INO80 complex which is involved in transcriptional regulation, DNA replication and probably DNA repair. This Mus musculus (Mouse) protein is Actin-like protein 6A (Actl6a).